Consider the following 470-residue polypeptide: Uronate isomerase (470 aa).

Belongs to the metallo-dependent hydrolases superfamily. Uronate isomerase family.

It catalyses the reaction D-glucuronate = D-fructuronate. The enzyme catalyses aldehydo-D-galacturonate = keto-D-tagaturonate. It participates in carbohydrate metabolism; pentose and glucuronate interconversion. This chain is Uronate isomerase, found in Salmonella newport (strain SL254).